The sequence spans 428 residues: MPGIVLIGAQWGDEGKGKATDLIGTKVDYVARFNGGNNAGHSVVVGDESYALHLLPSGIINPNLTPVIGNGVVVDPEVLFEEIDGLESRGIDCSHLKVSEAAHIIAPYHRTLDKVTERFLGKHKIGTTGRGIGPAYADKINRVGIRVHDLFNADHLHDKVEASLHQKNQMLVKLYNRRPIDVDQTTEELLKLGERLKPYVANTGLILNKALDEGKTVLFEGAQATMLDVDHGTYPFVTSSNPTAGGACTGTGVGPTKITRVIGVSKAYVTRVGEGPFPTELLDESGEWLRQQGHEFGVTTGRPRRCGWFDAVVNRYASQVNGLTDIVLTKLDVLTGLKEIPICVAYDVDGERHDDMPTDQAAFAAAKPIYETMPGWDEDISDCHSFDELPATCQAYVKRLEELSGCRISVIGTGPQRDHVIQINSLVD.

Residues 12-18 (GDEGKGK) and 40-42 (GHS) each bind GTP. Aspartate 13 functions as the Proton acceptor in the catalytic mechanism. Aspartate 13 and glycine 40 together coordinate Mg(2+). IMP-binding positions include 13 to 16 (DEGK), 38 to 41 (NAGH), threonine 128, arginine 142, glutamine 223, threonine 238, and arginine 302. Residue histidine 41 is the Proton donor of the active site. 298–304 (VTTGRPR) is a substrate binding site. GTP is bound by residues arginine 304, 330–332 (KLD), and 412–414 (GTG).

This sequence belongs to the adenylosuccinate synthetase family. As to quaternary structure, homodimer. Mg(2+) serves as cofactor.

It localises to the cytoplasm. It catalyses the reaction IMP + L-aspartate + GTP = N(6)-(1,2-dicarboxyethyl)-AMP + GDP + phosphate + 2 H(+). Its pathway is purine metabolism; AMP biosynthesis via de novo pathway; AMP from IMP: step 1/2. In terms of biological role, plays an important role in the de novo pathway of purine nucleotide biosynthesis. Catalyzes the first committed step in the biosynthesis of AMP from IMP. In Bifidobacterium longum subsp. infantis (strain ATCC 15697 / DSM 20088 / JCM 1222 / NCTC 11817 / S12), this protein is Adenylosuccinate synthetase.